A 1155-amino-acid polypeptide reads, in one-letter code: MHC class II transactivator (1155 aa).

The segment at 171–210 is required for acetyltransferase activity; the sequence is AYANIAELDQYVFQDTQLEGLSKDLFIEHIGAEEGFGENI. Disordered stretches follow at residues 217–237 and 297–357; these read GQKP…KHRK and SLSI…IKLP. Positions 224-233 are enriched in basic and acidic residues; the sequence is RFPEEHAMDS. In terms of domain architecture, NACHT spans 439–749; that stretch reads QVVAVLGKAG…CFLGAVWLAQ (311 aa). GTP is bound at residue 445–452; that stretch reads GKAGQGKS. LRR repeat units lie at residues 1010-1033, 1041-1062, 1070-1091, and 1098-1119; these read SLQH…SKLS, ALET…KLAE, SLLR…SLAQ, and SLRV…QLAS.

As to quaternary structure, interacts with ZXDA and ZXDC. Interacts with PML (isoform PML-2). Interacts with TAF7; interaction inhibits CIITA acetyltransferase activity, thereby repressing transcription. In terms of processing, autophosphorylated, affecting interaction with TAF7. In terms of tissue distribution, expressed at very high levels in dendritic cells, at very low levels in spleen and thymus and is not detected in other tissues. As to expression, detected at high levels in spleen and tonsil as well as in a number of B-lymphocyte cell lines, and at very low levels in dendritic cells.

The protein resides in the nucleus. It localises to the PML body. The catalysed reaction is L-seryl-[protein] + ATP = O-phospho-L-seryl-[protein] + ADP + H(+). The enzyme catalyses L-threonyl-[protein] + ATP = O-phospho-L-threonyl-[protein] + ADP + H(+). Functionally, essential for transcriptional activity of the HLA class II promoter; activation is via the proximal promoter. Does not bind DNA. May act in a coactivator-like fashion through protein-protein interactions by contacting factors binding to the proximal MHC class II promoter, to elements of the transcription machinery, or both. Alternatively it may activate HLA class II transcription by modifying proteins that bind to the MHC class II promoter. Also mediates enhanced MHC class I transcription, the promoter element requirements for CIITA-mediated transcription are distinct from those of constitutive MHC class I transcription, and CIITA can functionally replace TAF1 at these genes. Activates CD74 transcription. Exhibits intrinsic GTP-stimulated acetyltransferase activity. Exhibits serine/threonine protein kinase activity: phosphorylates the TFIID component TAF7, the RAP74 subunit of the general transcription factor TFIIF, histone H2B at 'Ser-37' and other histones. The sequence is that of MHC class II transactivator from Mus musculus (Mouse).